An 82-amino-acid chain; its full sequence is Small ribosomal subunit protein uS17 (82 aa).

Belongs to the universal ribosomal protein uS17 family. Part of the 30S ribosomal subunit.

Its function is as follows. One of the primary rRNA binding proteins, it binds specifically to the 5'-end of 16S ribosomal RNA. This chain is Small ribosomal subunit protein uS17, found in Aeromonas salmonicida (strain A449).